Consider the following 466-residue polypeptide: UPF0652 protein C16A11.03c (466 aa).

Belongs to the UPF0652 family.

The protein localises to the cytoplasm. Its subcellular location is the nucleus. The polypeptide is UPF0652 protein C16A11.03c (Schizosaccharomyces pombe (strain 972 / ATCC 24843) (Fission yeast)).